Consider the following 132-residue polypeptide: Profilin (132 aa).

It belongs to the profilin family. Occurs in many kinds of cells as a complex with monomeric actin in a 1:1 ratio.

It localises to the cytoplasm. Its subcellular location is the cytoskeleton. Functionally, binds to actin and affects the structure of the cytoskeleton. At high concentrations, profilin prevents the polymerization of actin, whereas it enhances it at low concentrations. By binding to PIP2, it inhibits the formation of IP3 and DG. The polypeptide is Profilin (Naegleria pringsheimi (Amoeba)).